Consider the following 216-residue polypeptide: Protein shisa-5 (216 aa).

The first 26 residues, 1-26 (MAAPAPAPRILVLLLLLLPAPEGAQS), serve as a signal peptide directing secretion. Residues 27 to 93 (ELCMISHGRK…SGFDSDPVAR (67 aa)) are Extracellular-facing. The chain crosses the membrane as a helical span at residues 94 to 114 (FGTVIAIGVTLFVIAVVTVIV). The Cytoplasmic portion of the chain corresponds to 115-216 (CCTCSCCCLY…AYMEPPKAVP (102 aa)).

This sequence belongs to the shisa family. Interacts with PDCD6; PDCD6 can stabilize SHISA5.

Its subcellular location is the endoplasmic reticulum membrane. The protein localises to the nucleus membrane. Functionally, can induce apoptosis in a caspase-dependent manner and plays a role in p53/TP53-dependent apoptosis. In Bos taurus (Bovine), this protein is Protein shisa-5 (SHISA5).